The chain runs to 239 residues: DNA repair protein RecO (239 aa).

The protein belongs to the RecO family.

Its function is as follows. Involved in DNA repair and RecF pathway recombination. This Stenotrophomonas maltophilia (strain R551-3) protein is DNA repair protein RecO.